Here is a 341-residue protein sequence, read N- to C-terminus: Cysteine and histidine-rich domain-containing protein 1 (341 aa).

Residues Cys-5, Cys-10, Cys-24, His-27, Cys-42, Cys-43, Cys-59, His-64, Cys-155, Cys-160, Cys-174, His-177, Cys-192, Cys-193, Cys-209, and His-214 each contribute to the Zn(2+) site. CHORD domains lie at 5-64 and 155-214; these read CYNK…KGPH and CKNG…RGKH. The disordered stretch occupies residues 61–81; that stretch reads KGPHNQEKPAEPVKPEVKSSL. Residues 64–81 are compositionally biased toward basic and acidic residues; sequence HNQEKPAEPVKPEVKSSL. Residues 225–314 enclose the CS domain; it reads VVPCRFDWHQ…AEPMSWARLD (90 aa). The tract at residues 313–341 is disordered; the sequence is LDLPPVAPPKEKEKEKDVDSEDECDDDED. Over residues 330–341 the composition is skewed to acidic residues; sequence VDSEDECDDDED.

Regulates centrosome duplication. In Danio rerio (Zebrafish), this protein is Cysteine and histidine-rich domain-containing protein 1 (chordc1).